A 346-amino-acid chain; its full sequence is E3 ubiquitin-protein ligase MARCHF9 (346 aa).

2 disordered regions span residues 20–39 and 47–92; these read GGGR…GGCG and STRD…PGAL. Positions 63–75 are enriched in basic and acidic residues; sequence PRARGLAGDKEPR. Over residues 77 to 90 the composition is skewed to pro residues; that stretch reads GPLPPPAPPLPPPG. An RING-CH-type zinc finger spans residues 102–162; that stretch reads DSGLRTPQCR…ELCYFKYQVL (61 aa). The Zn(2+) site is built by C110, C113, C126, C128, H136, C139, C152, and C155. 2 helical membrane passes run 185-205 and 219-239; these read IAAI…LIWS and LFQI…GLII. Disordered stretches follow at residues 273–301 and 326–346; these read DAGG…RPPA and PPDA…VTTV. Residues 284–296 show a composition bias toward polar residues; sequence PRNSRTGPTSGAT.

Homodimer. As to expression, ubiquitously expressed.

The protein resides in the golgi apparatus membrane. It localises to the lysosome membrane. The catalysed reaction is S-ubiquitinyl-[E2 ubiquitin-conjugating enzyme]-L-cysteine + [acceptor protein]-L-lysine = [E2 ubiquitin-conjugating enzyme]-L-cysteine + N(6)-ubiquitinyl-[acceptor protein]-L-lysine.. The protein operates within protein modification; protein ubiquitination. E3 ubiquitin-protein ligase that may mediate ubiquitination of MHC-I, CD4 and ICAM1, and promote their subsequent endocytosis and sorting to lysosomes via multivesicular bodies. E3 ubiquitin ligases accept ubiquitin from an E2 ubiquitin-conjugating enzyme in the form of a thioester and then directly transfer the ubiquitin to targeted substrates. This Homo sapiens (Human) protein is E3 ubiquitin-protein ligase MARCHF9.